Consider the following 726-residue polypeptide: Probable dipeptidyl-peptidase 5 (726 aa).

The signal sequence occupies residues 1-19; sequence MAAAKWLIASLAFASSGLA. N-linked (GlcNAc...) asparagine glycans are attached at residues Asn96 and Asn252. Positions 269–291 are disordered; sequence AEPINKRNGPRTPQGIEGASSSP. N-linked (GlcNAc...) asparagine glycosylation is present at Asn485. The active-site Charge relay system is the Ser558. Asn605 carries an N-linked (GlcNAc...) asparagine glycan. Catalysis depends on charge relay system residues Asp641 and His673. N-linked (GlcNAc...) asparagine glycosylation occurs at Asn699.

The protein belongs to the peptidase S9C family.

Its subcellular location is the secreted. In terms of biological role, extracellular dipeptidyl-peptidase which removes N-terminal dipeptides sequentially from polypeptides having unsubstituted N-termini. Contributes to pathogenicity. This is Probable dipeptidyl-peptidase 5 (DPP5) from Arthroderma benhamiae (strain ATCC MYA-4681 / CBS 112371) (Trichophyton mentagrophytes).